We begin with the raw amino-acid sequence, 168 residues long: 2-C-methyl-D-erythritol 2,4-cyclodiphosphate synthase (168 aa).

2 residues coordinate a divalent metal cation: D15 and H17. Residues 15–17 and 45–46 contribute to the 4-CDP-2-C-methyl-D-erythritol 2-phosphate site; these read DVH and HS. Residue H53 participates in a divalent metal cation binding. Residues 72 to 76, F150, and R153 each bind 4-CDP-2-C-methyl-D-erythritol 2-phosphate; that span reads FPNSD.

This sequence belongs to the IspF family. In terms of assembly, homotrimer. The cofactor is a divalent metal cation.

It carries out the reaction 4-CDP-2-C-methyl-D-erythritol 2-phosphate = 2-C-methyl-D-erythritol 2,4-cyclic diphosphate + CMP. The protein operates within isoprenoid biosynthesis; isopentenyl diphosphate biosynthesis via DXP pathway; isopentenyl diphosphate from 1-deoxy-D-xylulose 5-phosphate: step 4/6. Its function is as follows. Involved in the biosynthesis of isopentenyl diphosphate (IPP) and dimethylallyl diphosphate (DMAPP), two major building blocks of isoprenoid compounds. Catalyzes the conversion of 4-diphosphocytidyl-2-C-methyl-D-erythritol 2-phosphate (CDP-ME2P) to 2-C-methyl-D-erythritol 2,4-cyclodiphosphate (ME-CPP) with a corresponding release of cytidine 5-monophosphate (CMP). This chain is 2-C-methyl-D-erythritol 2,4-cyclodiphosphate synthase, found in Anaplasma phagocytophilum (strain HZ).